We begin with the raw amino-acid sequence, 536 residues long: Phosphoenolpyruvate carboxykinase (ATP) (536 aa).

Positions 61, 195, and 201 each coordinate substrate. Residues Lys201, His220, and 236–244 each bind ATP; that span reads GLSGTGKTT. Positions 201 and 220 each coordinate Mn(2+). Mn(2+) is bound at residue Asp257. ATP contacts are provided by Glu285, Arg322, and Thr447. Arg322 provides a ligand contact to substrate.

Belongs to the phosphoenolpyruvate carboxykinase (ATP) family. The cofactor is Mn(2+).

It is found in the cytoplasm. The enzyme catalyses oxaloacetate + ATP = phosphoenolpyruvate + ADP + CO2. It participates in carbohydrate biosynthesis; gluconeogenesis. In terms of biological role, involved in the gluconeogenesis. Catalyzes the conversion of oxaloacetate (OAA) to phosphoenolpyruvate (PEP) through direct phosphoryl transfer between the nucleoside triphosphate and OAA. This chain is Phosphoenolpyruvate carboxykinase (ATP), found in Agrobacterium fabrum (strain C58 / ATCC 33970) (Agrobacterium tumefaciens (strain C58)).